Here is a 155-residue protein sequence, read N- to C-terminus: MSTNKVNKERTFLAVKPDGVARGLVGEIIARYEKKGFVLVGLKQLVPTKDLAESHYAEHKERPFFGGLVSFITSGPVVAMVFEGKGVVASARLMIGVTNPLASAPGSIRGDFGVDVGRNIIHGSDSVESANREIALWFKPEELLTEVKPNPNLYE.

6 residues coordinate ATP: lysine 16, phenylalanine 64, arginine 92, threonine 98, arginine 109, and asparagine 119. The Pros-phosphohistidine intermediate role is filled by histidine 122.

Belongs to the NDK family. In terms of assembly, homohexamer. It depends on Mg(2+) as a cofactor.

Its subcellular location is the cytoplasm. It carries out the reaction a 2'-deoxyribonucleoside 5'-diphosphate + ATP = a 2'-deoxyribonucleoside 5'-triphosphate + ADP. The catalysed reaction is a ribonucleoside 5'-diphosphate + ATP = a ribonucleoside 5'-triphosphate + ADP. In terms of biological role, major role in the synthesis of nucleoside triphosphates other than ATP. This is Nucleoside diphosphate kinase, cytosolic (ndkC-1) from Dictyostelium discoideum (Social amoeba).